A 192-amino-acid polypeptide reads, in one-letter code: Cell division protein SepF (192 aa).

Positions 154-192 are disordered; it reads QEEPAPSNVTTTTQQSEETISESVTAPEPAWGTPVASAI. Residues 162-178 show a composition bias toward low complexity; sequence VTTTTQQSEETISESVT.

This sequence belongs to the SepF family. As to quaternary structure, homodimer. Interacts with FtsZ.

It localises to the cytoplasm. Functionally, cell division protein that is part of the divisome complex and is recruited early to the Z-ring. Probably stimulates Z-ring formation, perhaps through the cross-linking of FtsZ protofilaments. Its function overlaps with FtsA. This chain is Cell division protein SepF, found in Prochlorococcus marinus (strain MIT 9211).